Here is a 179-residue protein sequence, read N- to C-terminus: Protein GrpE (179 aa).

Residues 1–29 (MQDQDKYAEQAASIEDPVTAEAASATTPT) are disordered.

This sequence belongs to the GrpE family. In terms of assembly, homodimer.

Its subcellular location is the cytoplasm. Its function is as follows. Participates actively in the response to hyperosmotic and heat shock by preventing the aggregation of stress-denatured proteins, in association with DnaK and GrpE. It is the nucleotide exchange factor for DnaK and may function as a thermosensor. Unfolded proteins bind initially to DnaJ; upon interaction with the DnaJ-bound protein, DnaK hydrolyzes its bound ATP, resulting in the formation of a stable complex. GrpE releases ADP from DnaK; ATP binding to DnaK triggers the release of the substrate protein, thus completing the reaction cycle. Several rounds of ATP-dependent interactions between DnaJ, DnaK and GrpE are required for fully efficient folding. In Janthinobacterium sp. (strain Marseille) (Minibacterium massiliensis), this protein is Protein GrpE.